A 284-amino-acid chain; its full sequence is Tropomyosin (284 aa).

The segment at 1–41 (MDAIKKKMQAMKLEKDNAVDRAETAEQQSRDAALRAEKAEE) is disordered. Residues 1–284 (MDAIKKKMQA…DQTFSELTGY (284 aa)) adopt a coiled-coil conformation. Basic and acidic residues predominate over residues 12-41 (KLEKDNAVDRAETAEQQSRDAALRAEKAEE).

Belongs to the tropomyosin family. Homodimer.

In terms of biological role, tropomyosin, in association with the troponin complex, plays a central role in the calcium dependent regulation of muscle contraction. This Haemaphysalis longicornis (Bush tick) protein is Tropomyosin.